The primary structure comprises 346 residues: Small ribosomal subunit biogenesis GTPase RsgA 1 (346 aa).

The CP-type G domain maps to 93–248 (EEQLIAANFD…IIDTPGMREF (156 aa)). GTP-binding positions include 138 to 141 (TKAD) and 190 to 198 (GSSGVGKSS). Residues cysteine 271, cysteine 276, histidine 278, and cysteine 284 each coordinate Zn(2+).

It belongs to the TRAFAC class YlqF/YawG GTPase family. RsgA subfamily. In terms of assembly, monomer. Associates with 30S ribosomal subunit, binds 16S rRNA. Zn(2+) is required as a cofactor.

Its subcellular location is the cytoplasm. In terms of biological role, one of several proteins that assist in the late maturation steps of the functional core of the 30S ribosomal subunit. Helps release RbfA from mature subunits. May play a role in the assembly of ribosomal proteins into the subunit. Circularly permuted GTPase that catalyzes slow GTP hydrolysis, GTPase activity is stimulated by the 30S ribosomal subunit. The chain is Small ribosomal subunit biogenesis GTPase RsgA 1 from Listeria innocua serovar 6a (strain ATCC BAA-680 / CLIP 11262).